The following is a 204-amino-acid chain: High frequency lysogenization protein HflD homolog (204 aa).

The protein belongs to the HflD family.

The protein resides in the cytoplasm. Its subcellular location is the cell inner membrane. The polypeptide is High frequency lysogenization protein HflD homolog (Actinobacillus succinogenes (strain ATCC 55618 / DSM 22257 / CCUG 43843 / 130Z)).